Reading from the N-terminus, the 206-residue chain is Small ribosomal subunit protein uS4 (206 aa).

The region spanning 96–156 (GRLDNVVYRM…EKAKKQARIK (61 aa)) is the S4 RNA-binding domain.

Belongs to the universal ribosomal protein uS4 family. Part of the 30S ribosomal subunit. Contacts protein S5. The interaction surface between S4 and S5 is involved in control of translational fidelity.

One of the primary rRNA binding proteins, it binds directly to 16S rRNA where it nucleates assembly of the body of the 30S subunit. Its function is as follows. With S5 and S12 plays an important role in translational accuracy. The chain is Small ribosomal subunit protein uS4 from Aeromonas salmonicida (strain A449).